The sequence spans 184 residues: Ras-related protein Rap-1b-like protein (184 aa).

Residue 10 to 18 participates in GTP binding; it reads GSRGVGKSA. Residues 32–40 carry the Effector region motif; the sequence is YDPTIEDSY. GTP-binding positions include 57-61, 116-119, and 147-149; these read DTAGT, NKCD, and SAK. Cys181 is lipidated: S-geranylgeranyl cysteine. A propeptide spans 182–184 (removed in mature form); that stretch reads QLL.

This sequence belongs to the small GTPase superfamily. Ras family.

It is found in the cell membrane. It localises to the cytoplasm. The protein localises to the cytosol. The catalysed reaction is GTP + H2O = GDP + phosphate + H(+). In terms of biological role, probable GTP-binding protein with intrinsic GTPase activity. This is Ras-related protein Rap-1b-like protein from Homo sapiens (Human).